The following is a 233-amino-acid chain: MSVYVLIPAAGMGRRMGASVNKQYLPLGDRPVLSHTIALFDRHPGIDHIFVICPEAEFPLCRREVIDPYDFRKVRGLVAGGAERQDSVRNGLQACQAAEGDIVLIHDGARPLLPPALIEPTVAAAQQCGAAIVGVPVKDTIKLVTDGMIDSTPDRSLLWQAQTPQAFRFGLIRDAHAQALQQHHKGTDDASLIEWLGGRVAMIEGSYRNIKITTPEDLVLAQAFLDTPGDFQA.

It belongs to the IspD/TarI cytidylyltransferase family. IspD subfamily.

It catalyses the reaction 2-C-methyl-D-erythritol 4-phosphate + CTP + H(+) = 4-CDP-2-C-methyl-D-erythritol + diphosphate. It participates in isoprenoid biosynthesis; isopentenyl diphosphate biosynthesis via DXP pathway; isopentenyl diphosphate from 1-deoxy-D-xylulose 5-phosphate: step 2/6. Its function is as follows. Catalyzes the formation of 4-diphosphocytidyl-2-C-methyl-D-erythritol from CTP and 2-C-methyl-D-erythritol 4-phosphate (MEP). The sequence is that of 2-C-methyl-D-erythritol 4-phosphate cytidylyltransferase from Syntrophotalea carbinolica (strain DSM 2380 / NBRC 103641 / GraBd1) (Pelobacter carbinolicus).